The sequence spans 1134 residues: Nck-associated protein 1-like (1134 aa).

The tract at residues 638–671 (KAKNKKSMKQRQAPRKGEPERDKPGAESHRKNRS) is disordered. The segment covering 639-651 (AKNKKSMKQRQAP) has biased composition (basic residues). Residues 652–666 (RKGEPERDKPGAESH) show a composition bias toward basic and acidic residues. The chain crosses the membrane as a helical span at residues 999-1019 (LLLIFLAVSLPLLATDPSSFF).

In hematopoietic cells, component of the WAVE2 complex composed of ABI1, CYFIP1/SRA1, NCKAP1L/HEM1 and WASF2/WAVE2. Interacts with ARHGAP4, PIK3C3/VPS34 and PPP1R12A/MYPT1. Interacts with mammalian target of rapamycin complex 2 (mTORC2) components, including MTOR and RICTOR. As to expression, predominantly expressed in developing and mature hematopoietic cells. Also detected in urogenital tissues, including testis.

The protein resides in the membrane. It is found in the cytoplasm. Essential hematopoietic-specific regulator of the actin cytoskeleton. Controls lymphocyte development, activation, proliferation and homeostasis, erythrocyte membrane stability, as well as phagocytosis and migration by neutrophils and macrophages. Component of the WAVE2 complex which signals downstream of RAC to stimulate F-actin polymerization. Required for stabilization and/or translation of the WAVE2 complex proteins in hematopoietic cells. Within the WAVE2 complex, enables the cortical actin network to restrain excessive degranulation and granule release by T-cells. Required for efficient T-lymphocyte and neutrophil migration. Exhibits complex cycles of activation and inhibition to generate waves of propagating the assembly with actin. Also involved in mechanisms WAVE independent to regulate myosin and actin polymerization during neutrophil chemotaxis. In T-cells, required for proper mechanistic target of rapamycin complex 2 (mTORC2)-dependent AKT phosphorylation, cell proliferation and cytokine secretion, including that of IL2 and TNF. This chain is Nck-associated protein 1-like, found in Mus musculus (Mouse).